The sequence spans 103 residues: Histone H4 (103 aa).

The segment covering 1–14 (MTGRGKGGKGLGKG) has biased composition (gly residues). Residues 1-20 (MTGRGKGGKGLGKGGAKRHR) are disordered. Lysine 6 carries the post-translational modification N6-acetyl-N6-methyllysine; alternate. Lysine 6, lysine 9, and lysine 13 each carry N6-methyllysine; alternate. Lysine 13 carries the N6-acetyl-N6-methyllysine; alternate modification. Residues 17 to 21 (KRHRK) mediate DNA binding. Lysine 92 is subject to N6-glutaryllysine.

This sequence belongs to the histone H4 family. In terms of assembly, the nucleosome is a histone octamer containing two molecules each of H2A, H2B, H3 and H4 assembled in one H3-H4 heterotetramer and two H2A-H2B heterodimers. The octamer wraps approximately 147 bp of DNA. Glutarylation at Lys-92 (H4K91glu) destabilizes nucleosomes by promoting dissociation of the H2A-H2B dimers from nucleosomes.

The protein localises to the nucleus. Its subcellular location is the chromosome. In terms of biological role, core component of nucleosome. Nucleosomes wrap and compact DNA into chromatin, limiting DNA accessibility to the cellular machineries which require DNA as a template. Histones thereby play a central role in transcription regulation, DNA repair, DNA replication and chromosomal stability. DNA accessibility is regulated via a complex set of post-translational modifications of histones, also called histone code, and nucleosome remodeling. The chain is Histone H4 (hH4-1) from Neurospora crassa (strain ATCC 24698 / 74-OR23-1A / CBS 708.71 / DSM 1257 / FGSC 987).